We begin with the raw amino-acid sequence, 770 residues long: Nucleus-vacuole junction protein 2 (770 aa).

The Cytoplasmic segment spans residues 1-5; it reads MASLK. A helical; Signal-anchor for type II membrane protein membrane pass occupies residues 6-26; that stretch reads VFLAVYLLGGITFLPLVLFTL. The Lumenal segment spans residues 27-770; the sequence is YKIHLLYSNL…EFEEQREPKL (744 aa). The PH domain maps to 114-266; sequence TALQEQILQR…WYYQLINASK (153 aa). N-linked (GlcNAc...) asparagine glycosylation is found at N228, N263, N279, N300, N391, N528, and N529. Residues 304-504 enclose the SMP-LTD domain; that stretch reads NQLTTKWLNA…YPTPNEVYRG (201 aa). Disordered regions lie at residues 541-566, 578-600, and 615-770; these read EGGMKTQSRIKKALRPERKKENLKDL, TQTTVTTATNDDVSSSENSTKSR, and KDNV…EPKL. Over residues 554–566 the composition is skewed to basic and acidic residues; it reads LRPERKKENLKDL. The span at 587 to 596 shows a compositional bias: polar residues; the sequence is NDDVSSSENS. N-linked (GlcNAc...) asparagine glycans are attached at residues N595 and N620. 2 positions are modified to phosphoserine: S640 and S669. Residues 679-688 show a composition bias toward basic and acidic residues; it reads LEGRKEKDTE. N-linked (GlcNAc...) asparagine glycosylation occurs at N700. Composition is skewed to polar residues over residues 713–725 and 736–751; these read FSVSSNDSQNSLK and LESSQAFVKKTSQNRF. Residue S717 is modified to Phosphoserine. Residue N718 is glycosylated (N-linked (GlcNAc...) asparagine). S720 and S723 each carry phosphoserine. Positions 756–770 are enriched in basic and acidic residues; it reads FKQDLEFEEQREPKL.

Its subcellular location is the endoplasmic reticulum membrane. It localises to the nucleus membrane. Functionally, during endoplasmic reticulum (ER) stress or when cellular ceramide levels increase, induces contacts between the ER and medial-Golgi complex to facilitate non-vesicular transport of ceramides from the ER to the Golgi complex where they are converted to complex sphingolipids, preventing toxic ceramide accumulation. The protein is Nucleus-vacuole junction protein 2 of Saccharomyces cerevisiae (strain ATCC 204508 / S288c) (Baker's yeast).